A 96-amino-acid polypeptide reads, in one-letter code: Transcription and mRNA export factor ENY2 (96 aa).

It belongs to the ENY2 family. As to quaternary structure, component of the nuclear pore complex (NPC)-associated TREX-2 complex (transcription and export complex 2). Component of the SAGA transcription coactivator-HAT complex. Within the SAGA complex, participates in a subcomplex of SAGA called the DUB module (deubiquitination module).

It is found in the nucleus. It localises to the nucleoplasm. Involved in mRNA export coupled transcription activation by association with both the TREX-2 and the SAGA complexes. The transcription regulatory histone acetylation (HAT) complex SAGA is a multiprotein complex that activates transcription by remodeling chromatin and mediating histone acetylation and deubiquitination. Within the SAGA complex, participates in a subcomplex that specifically deubiquitinates histones. The SAGA complex is recruited to specific gene promoters by activators, where it is required for transcription. The TREX-2 complex functions in docking export-competent ribonucleoprotein particles (mRNPs) to the nuclear entrance of the nuclear pore complex (nuclear basket). TREX-2 participates in mRNA export and accurate chromatin positioning in the nucleus by tethering genes to the nuclear periphery. The polypeptide is Transcription and mRNA export factor ENY2 (Taeniopygia guttata (Zebra finch)).